Reading from the N-terminus, the 212-residue chain is Imidazole glycerol phosphate synthase subunit HisH (212 aa).

One can recognise a Glutamine amidotransferase type-1 domain in the interval 3–211 (LIAVIDYDMG…VQQVQKLALV (209 aa)). Cysteine 81 (nucleophile) is an active-site residue. Catalysis depends on residues histidine 186 and glutamate 188.

Heterodimer of HisH and HisF.

The protein localises to the cytoplasm. The enzyme catalyses 5-[(5-phospho-1-deoxy-D-ribulos-1-ylimino)methylamino]-1-(5-phospho-beta-D-ribosyl)imidazole-4-carboxamide + L-glutamine = D-erythro-1-(imidazol-4-yl)glycerol 3-phosphate + 5-amino-1-(5-phospho-beta-D-ribosyl)imidazole-4-carboxamide + L-glutamate + H(+). It catalyses the reaction L-glutamine + H2O = L-glutamate + NH4(+). The protein operates within amino-acid biosynthesis; L-histidine biosynthesis; L-histidine from 5-phospho-alpha-D-ribose 1-diphosphate: step 5/9. Its function is as follows. IGPS catalyzes the conversion of PRFAR and glutamine to IGP, AICAR and glutamate. The HisH subunit catalyzes the hydrolysis of glutamine to glutamate and ammonia as part of the synthesis of IGP and AICAR. The resulting ammonia molecule is channeled to the active site of HisF. The protein is Imidazole glycerol phosphate synthase subunit HisH of Microcystis aeruginosa (strain NIES-843 / IAM M-2473).